The sequence spans 282 residues: Bis(5'-nucleosyl)-tetraphosphatase, symmetrical (282 aa).

This sequence belongs to the Ap4A hydrolase family.

The enzyme catalyses P(1),P(4)-bis(5'-adenosyl) tetraphosphate + H2O = 2 ADP + 2 H(+). Hydrolyzes diadenosine 5',5'''-P1,P4-tetraphosphate to yield ADP. This chain is Bis(5'-nucleosyl)-tetraphosphatase, symmetrical, found in Enterobacter sp. (strain 638).